The sequence spans 215 residues: Proteasome subunit beta (215 aa).

Positions 1–12 (MLGEIQDKVYKG) are cleaved as a propeptide — removed in mature form; by autocatalysis. Residue Thr-13 is the Nucleophile of the active site.

The protein belongs to the peptidase T1B family. In terms of assembly, the 20S proteasome core is composed of 14 alpha and 14 beta subunits that assemble into four stacked heptameric rings, resulting in a barrel-shaped structure. The two inner rings, each composed of seven catalytic beta subunits, are sandwiched by two outer rings, each composed of seven alpha subunits. The catalytic chamber with the active sites is on the inside of the barrel. Has a gated structure, the ends of the cylinder being occluded by the N-termini of the alpha-subunits. Is capped at one or both ends by the proteasome regulatory ATPase, PAN.

The protein localises to the cytoplasm. It carries out the reaction Cleavage of peptide bonds with very broad specificity.. Its activity is regulated as follows. The formation of the proteasomal ATPase PAN-20S proteasome complex, via the docking of the C-termini of PAN into the intersubunit pockets in the alpha-rings, triggers opening of the gate for substrate entry. Interconversion between the open-gate and close-gate conformations leads to a dynamic regulation of the 20S proteasome proteolysis activity. Functionally, component of the proteasome core, a large protease complex with broad specificity involved in protein degradation. The polypeptide is Proteasome subunit beta (Archaeoglobus profundus (strain DSM 5631 / JCM 9629 / NBRC 100127 / Av18)).